We begin with the raw amino-acid sequence, 209 residues long: Uracil phosphoribosyltransferase (209 aa).

Residues arginine 79, arginine 104, and 131–139 (DPMLATGGS) each bind 5-phospho-alpha-D-ribose 1-diphosphate. Uracil is bound by residues isoleucine 194 and 199–201 (GDA). Position 200 (aspartate 200) interacts with 5-phospho-alpha-D-ribose 1-diphosphate.

It belongs to the UPRTase family. The cofactor is Mg(2+).

The catalysed reaction is UMP + diphosphate = 5-phospho-alpha-D-ribose 1-diphosphate + uracil. The protein operates within pyrimidine metabolism; UMP biosynthesis via salvage pathway; UMP from uracil: step 1/1. Its activity is regulated as follows. Allosterically activated by GTP. Its function is as follows. Catalyzes the conversion of uracil and 5-phospho-alpha-D-ribose 1-diphosphate (PRPP) to UMP and diphosphate. This chain is Uracil phosphoribosyltransferase, found in Streptococcus salivarius.